Here is a 567-residue protein sequence, read N- to C-terminus: ERO1-like protein 2 (567 aa).

The N-terminal stretch at 1–22 is a signal peptide; the sequence is MKIAKGLVGLLILYKNVCQVLC. An N-linked (GlcNAc...) asparagine glycan is attached at Asn49. Disulfide bonds link Cys88-Cys386, Cys98-Cys103, Cys154-Cys325, and Cys389-Cys392. FAD-binding residues include Arg188, Thr190, Trp201, Ser258, His261, and Lys290. Cys389 (nucleophile) is an active-site residue. Cys392 is an active-site residue. A glycan (N-linked (GlcNAc...) asparagine) is linked at Asn546.

Belongs to the EROs family. As to quaternary structure, may function both as a monomer and a homodimer. FAD is required as a cofactor. N-glycosylated.

Its subcellular location is the endoplasmic reticulum membrane. Functionally, essential oxidoreductase that oxidizes proteins in the endoplasmic reticulum to produce disulfide bonds. Acts by oxidizing directly pdi1 isomerase through a direct disulfide exchange. Does not act as a direct oxidant of folding substrate, but relies on pdi1 to transfer oxidizing equivalent. Does not oxidize all pdi related proteins, suggesting that it can discriminate between pdi1 and related proteins. Its reoxidation probably involves electron transfer to molecular oxygen via FAD. Acts independently of glutathione. May be responsible for a significant proportion of reactive oxygen species (ROS) in the cell, thereby being a source of oxidative stress. In Schizosaccharomyces pombe (strain 972 / ATCC 24843) (Fission yeast), this protein is ERO1-like protein 2 (ero12).